Consider the following 373-residue polypeptide: LIM domain-binding protein 2 (373 aa).

Disordered stretches follow at residues 244–287 and 327–373; these read APPA…KTPA and QYDA…QASQ. Positions 263–280 are enriched in low complexity; it reads STSSTSNSSAGNTTNSAG. Positions 298-337 constitute an LIM interaction domain (LID) domain; that stretch reads DVMVVGEPTLMGGEFGDEDERLITRLENTQYDAANGMDDE. The segment covering 341–373 has biased composition (polar residues); sequence NNSPALGNNSPWNSKPPATQETKSENAPPQASQ.

It belongs to the LDB family. In terms of assembly, interacts with LHX9. Interacts with SLK; leading to negatively regulate SLK kinase activity. Interacts with LMO4. As to quaternary structure, interacts with PITX1. Interacts with LHX3. Ubiquitinated by RLIM/RNF12, leading to its degradation by the proteasome. Expressed in multiple tissues including heart, brain, liver, kidney, testis, lung and muscle, with expression highest in the brain, trigeminal ganglia, and lung.

The protein localises to the nucleus. Transcription cofactor. Binds to the LIM domain of a wide variety of LIM domain-containing transcription factors. Its function is as follows. Regulates the transcriptional activity of LIM-containing proteins such as LHX3 or PITX1. In Mus musculus (Mouse), this protein is LIM domain-binding protein 2 (Ldb2).